We begin with the raw amino-acid sequence, 177 residues long: MSRVAKAPVTIPAGVEVTLNGQELSIKGGKGSLVRSIHAGVEVTKEDNVLKFAPRDGIAGADAQAGTARALVNNMVIGVTQGFERKLQLVGVGYKASIKGNAVALALGFSHPVEHALPAGVTAECPTATEIVLRGVDKQLVGQVAADIRAYRAPEPYKGKGVRYANEQVRTKEAKKK.

The protein belongs to the universal ribosomal protein uL6 family. In terms of assembly, part of the 50S ribosomal subunit.

Functionally, this protein binds to the 23S rRNA, and is important in its secondary structure. It is located near the subunit interface in the base of the L7/L12 stalk, and near the tRNA binding site of the peptidyltransferase center. The polypeptide is Large ribosomal subunit protein uL6 (Aeromonas hydrophila subsp. hydrophila (strain ATCC 7966 / DSM 30187 / BCRC 13018 / CCUG 14551 / JCM 1027 / KCTC 2358 / NCIMB 9240 / NCTC 8049)).